The sequence spans 251 residues: Zinc import ATP-binding protein ZnuC (251 aa).

One can recognise an ABC transporter domain in the interval 5–220 (VSLENVSVSF…PEFISMFGPR (216 aa)). 37 to 44 (GPNGAGKS) contacts ATP.

It belongs to the ABC transporter superfamily. Zinc importer (TC 3.A.1.15.5) family. The complex is composed of two ATP-binding proteins (ZnuC), two transmembrane proteins (ZnuB) and a solute-binding protein (ZnuA).

It is found in the cell inner membrane. The catalysed reaction is Zn(2+)(out) + ATP(in) + H2O(in) = Zn(2+)(in) + ADP(in) + phosphate(in) + H(+)(in). In terms of biological role, part of the ABC transporter complex ZnuABC involved in zinc import. Responsible for energy coupling to the transport system. The protein is Zinc import ATP-binding protein ZnuC of Shigella flexneri serotype 5b (strain 8401).